Here is a 229-residue protein sequence, read N- to C-terminus: Ribonuclease 3 (229 aa).

One can recognise an RNase III domain in the interval 5–127; the sequence is LDRLERKLGY…LIGAIYQDAD (123 aa). Position 40 (Glu-40) interacts with Mg(2+). Asp-44 is a catalytic residue. Asp-113 and Glu-116 together coordinate Mg(2+). Residue Glu-116 is part of the active site. The DRBM domain maps to 154–224; that stretch reads DPKTRLQEFL…AAAALIALGV (71 aa).

The protein belongs to the ribonuclease III family. Homodimer. Mg(2+) is required as a cofactor.

The protein resides in the cytoplasm. It catalyses the reaction Endonucleolytic cleavage to 5'-phosphomonoester.. Functionally, digests double-stranded RNA. Involved in the processing of primary rRNA transcript to yield the immediate precursors to the large and small rRNAs (23S and 16S). Processes some mRNAs, and tRNAs when they are encoded in the rRNA operon. Processes pre-crRNA and tracrRNA of type II CRISPR loci if present in the organism. The chain is Ribonuclease 3 from Pseudomonas entomophila (strain L48).